The sequence spans 125 residues: NADH dehydrogenase [ubiquinone] 1 beta subcomplex subunit 8, mitochondrial (125 aa).

Residues 1 to 29 (MAGRLSGVASRIMGGNGVVARSVGSSLRQ) constitute a mitochondrion transit peptide. The helical transmembrane segment at 78-98 (ALAWLSGGLGFFVGLGLLAVL) threads the bilayer.

Belongs to the complex I NDUFB8 subunit family. As to quaternary structure, complex I is composed of at least 49 different subunits.

It is found in the mitochondrion inner membrane. Its function is as follows. Accessory subunit of the mitochondrial membrane respiratory chain NADH dehydrogenase (Complex I), that is believed not to be involved in catalysis. Complex I functions in the transfer of electrons from NADH to the respiratory chain. The immediate electron acceptor for the enzyme is believed to be ubiquinone. The chain is NADH dehydrogenase [ubiquinone] 1 beta subcomplex subunit 8, mitochondrial from Arabidopsis thaliana (Mouse-ear cress).